The sequence spans 113 residues: Small ribosomal subunit protein bS6 (113 aa).

It belongs to the bacterial ribosomal protein bS6 family.

Its function is as follows. Binds together with bS18 to 16S ribosomal RNA. The sequence is that of Small ribosomal subunit protein bS6 from Ruthia magnifica subsp. Calyptogena magnifica.